The sequence spans 257 residues: 3-methyl-2-oxobutanoate hydroxymethyltransferase (257 aa).

Positions 42 and 86 each coordinate Mg(2+). 3-methyl-2-oxobutanoate is bound by residues 42–43 (DS), aspartate 86, and lysine 116. Glutamate 118 contributes to the Mg(2+) binding site. Residue glutamate 185 is the Proton acceptor of the active site.

The protein belongs to the PanB family. Homodecamer; pentamer of dimers. Mg(2+) is required as a cofactor.

It localises to the cytoplasm. It catalyses the reaction 3-methyl-2-oxobutanoate + (6R)-5,10-methylene-5,6,7,8-tetrahydrofolate + H2O = 2-dehydropantoate + (6S)-5,6,7,8-tetrahydrofolate. It participates in cofactor biosynthesis; (R)-pantothenate biosynthesis; (R)-pantoate from 3-methyl-2-oxobutanoate: step 1/2. Its function is as follows. Catalyzes the reversible reaction in which hydroxymethyl group from 5,10-methylenetetrahydrofolate is transferred onto alpha-ketoisovalerate to form ketopantoate. The protein is 3-methyl-2-oxobutanoate hydroxymethyltransferase of Prochlorococcus marinus (strain MIT 9312).